Reading from the N-terminus, the 174-residue chain is Putative FAS1 domain-containing protein 096L (174 aa).

The 136-residue stretch at 36–171 folds into the FAS1 domain; that stretch reads PDTLWSKLNE…GIIHLMEEVY (136 aa).

This chain is Putative FAS1 domain-containing protein 096L, found in Acheta domesticus (House cricket).